The following is a 158-amino-acid chain: NADPH-dependent 7-cyano-7-deazaguanine reductase (158 aa).

Cys-56 serves as the catalytic Thioimide intermediate. The active-site Proton donor is the Asp-63. Residues 78-80 (VES) and 97-98 (HE) each bind substrate.

This sequence belongs to the GTP cyclohydrolase I family. QueF type 1 subfamily.

Its subcellular location is the cytoplasm. It carries out the reaction 7-aminomethyl-7-carbaguanine + 2 NADP(+) = 7-cyano-7-deazaguanine + 2 NADPH + 3 H(+). Its pathway is tRNA modification; tRNA-queuosine biosynthesis. Catalyzes the NADPH-dependent reduction of 7-cyano-7-deazaguanine (preQ0) to 7-aminomethyl-7-deazaguanine (preQ1). The protein is NADPH-dependent 7-cyano-7-deazaguanine reductase of Rhodopseudomonas palustris (strain HaA2).